Reading from the N-terminus, the 475-residue chain is Probable proline--tRNA ligase, mitochondrial (475 aa).

The transit peptide at 1 to 29 (MEGLLTRCRALPALATCSRQLSGYVPCRF) directs the protein to the mitochondrion.

This sequence belongs to the class-II aminoacyl-tRNA synthetase family.

Its subcellular location is the mitochondrion matrix. The enzyme catalyses tRNA(Pro) + L-proline + ATP = L-prolyl-tRNA(Pro) + AMP + diphosphate. Its function is as follows. Mitochondrial aminoacyl-tRNA synthetase that catalyzes the specific attachment of the proline amino acid (aa) to the homologous transfer RNA (tRNA), further participating in protein synthesis. The reaction occurs in a two steps: proline is first activated by ATP to form Pro-AMP and then transferred to the acceptor end of tRNA(Pro). This chain is Probable proline--tRNA ligase, mitochondrial, found in Homo sapiens (Human).